Here is a 418-residue protein sequence, read N- to C-terminus: 3-isopropylmalate dehydratase large subunit (418 aa).

3 residues coordinate [4Fe-4S] cluster: C299, C359, and C362.

Belongs to the aconitase/IPM isomerase family. LeuC type 2 subfamily. As to quaternary structure, heterodimer of LeuC and LeuD. [4Fe-4S] cluster is required as a cofactor.

The catalysed reaction is (2R,3S)-3-isopropylmalate = (2S)-2-isopropylmalate. It participates in amino-acid biosynthesis; L-leucine biosynthesis; L-leucine from 3-methyl-2-oxobutanoate: step 2/4. Catalyzes the isomerization between 2-isopropylmalate and 3-isopropylmalate, via the formation of 2-isopropylmaleate. The polypeptide is 3-isopropylmalate dehydratase large subunit (Nitratidesulfovibrio vulgaris (strain DSM 19637 / Miyazaki F) (Desulfovibrio vulgaris)).